The chain runs to 335 residues: Vitamin B12 import system permease protein BtuC (335 aa).

9 helical membrane-spanning segments follow: residues 25 to 45 (LVVI…IWLW), 67 to 87 (LAVL…QALF), 95 to 114 (GLLG…VLLG), 118 to 140 (LPIW…LLLG), 153 to 173 (LLVG…AVYF), 200 to 220 (LVLA…VLNF), 243 to 263 (VLAI…ISFI), 286 to 306 (CALA…IALF), and 308 to 328 (AELP…IWLL).

Belongs to the binding-protein-dependent transport system permease family. FecCD subfamily. The complex is composed of two ATP-binding proteins (BtuD), two transmembrane proteins (BtuC) and a solute-binding protein (BtuF).

Its subcellular location is the cell inner membrane. Part of the ABC transporter complex BtuCDF involved in vitamin B12 import. Involved in the translocation of the substrate across the membrane. This chain is Vitamin B12 import system permease protein BtuC, found in Yersinia enterocolitica serotype O:8 / biotype 1B (strain NCTC 13174 / 8081).